Here is a 125-residue protein sequence, read N- to C-terminus: Secreted RxLR effector protein RXLR-C13 (125 aa).

A signal peptide spans 1–23 (MVNSLTFTLVVVCLVRSCDGVAA). Positions 43–73 (RVLQETATANDDVKKLSTSTKVDSKLNQEIK) match the RxLR-dEER motif. An N-linked (GlcNAc...) asparagine glycan is attached at Asn85. The chain crosses the membrane as a helical span at residues 106–123 (FFILATILLFPIAAYMVA).

Belongs to the RxLR effector family.

Its subcellular location is the secreted. The protein localises to the host endoplasmic reticulum membrane. Its function is as follows. Secreted effector that does not suppress pattern-triggered immunity (PTI) in plant host. This Plasmopara halstedii (Downy mildew of sunflower) protein is Secreted RxLR effector protein RXLR-C13.